We begin with the raw amino-acid sequence, 4903 residues long: Histone-lysine N-methyltransferase 2C (4903 aa).

2 disordered regions span residues 1 to 116 and 159 to 202; these read MSSE…SEES and LTLP…PPQQ. Pro residues predominate over residues 13–28; it reads QPPPAPPEEPGAPAPS. Phosphoserine occurs at positions 28 and 46. Positions 34–46 form a DNA-binding region, a.T hook; sequence KRPRGRPRKDGAS. Positions 50 to 59 are enriched in basic residues; the sequence is RARKKPRSRG. The span at 64-81 shows a compositional bias: acidic residues; it reads EDEDSMDGLETTETENIV. 2 positions are modified to phosphoserine: S89 and S113. The segment covering 101 to 116 has biased composition (polar residues); it reads SKQPVSALQRSVSEES. Residues 226–261 form a C2HC pre-PHD-type 1; degenerate zinc finger; it reads ELSLVGLPDAIDVQALFDSTGTCWAHHRCVEWSLGI. 4 consecutive PHD-type zinc fingers follow at residues 282-330, 340-390, 387-437, and 463-519; these read ERCA…PEHI, DANC…CKVC, CKVC…CRIC, and DNLC…CKHL. The segment at 343 to 388 adopts an RING-type zinc-finger fold; that stretch reads CAVCDSPGDLLDQFFCTTCGQHYHGMCLDIAVTPLKRAGWQCPECK. Positions 435–488 constitute a DHHC domain; it reads RICIECGTRSSTQWHHNCLICDTCYQQQDNLCPFCGKCYHPELQKDMLHCNMCK. A disordered region spans residues 671–703; it reads SEVASKELSPPKSAPETAAPEALLSPHSERSLS. N6-acetyllysine is present on K751. Residues 824–835 show a composition bias toward basic residues; that stretch reads TKRKFSPGRPRS. 2 disordered regions span residues 824-857 and 882-904; these read TKRK…DTSE and GFPG…GRSK. Residues 838–848 are compositionally biased toward polar residues; that stretch reads GAWSNHNTVSP. Position 847 is a phosphoserine (S847). PHD-type zinc fingers lie at residues 950–1003, 1000–1050, and 1077–1132; these read QDMC…CTVC, CTVC…CVWC, and LSSC…CRPY. Residues 1208–1318 are disordered; sequence AVLQTPPDIQ…PSRDDGWREQ (111 aa). Basic and acidic residues predominate over residues 1217–1263; it reads QSEHSRDGEMDDSREGELMDCDGKSESSPEREAGDDETKGIEGTDAI. S1294 carries the post-translational modification Phosphoserine. The segment covering 1309 to 1318 has biased composition (basic and acidic residues); that stretch reads PSRDDGWREQ. Positions 1330–1352 form a coiled coil; sequence VAENTDKIKKRYRKRKNKLEETF. Disordered regions lie at residues 1397 to 1419 and 1447 to 1473; these read SDPL…ADDP and HSDI…RPLT. Polar residues-rich tracts occupy residues 1406 to 1415 and 1455 to 1471; these read TSAKPGTQGT and ADAS…SSRP. At K1497 the chain carries N6-acetyllysine. 2 disordered regions span residues 1594 to 1617 and 1698 to 1757; these read NAIA…ENDT and VQMS…AKIE. Residues 1599–1617 show a composition bias toward polar residues; it reads DPNSSWAPTTPSMEGENDT. A compositionally biased stretch (low complexity) spans 1707–1717; sequence RQQQQDSIDPS. Residues 1718–1742 are compositionally biased toward basic and acidic residues; sequence SRIDSDLFKDPLKQRESEHEQEWKF. Positions 1743–1790 form a coiled coil; that stretch reads RQQMRQKSKQQAKIEATQKLEQVKNEQQQQQQQQQQQQQQQLASQHLL. An N6-acetyllysine modification is found at K1761. Positions 1791–2375 are disordered; the sequence is VAPGSDTPSS…MSQADTEKLR (585 aa). A compositionally biased stretch (polar residues) spans 1796-1819; sequence DTPSSGAQSPLTPQAGNGNVSPAQ. Residues 1855–1886 are compositionally biased toward low complexity; it reads PSRIPVQESLSQSQNSQPPSPQMFSPGSSHSR. The residue at position 1983 (S1983) is a Phosphoserine. The segment covering 1986–2001 has biased composition (polar residues); that stretch reads ISEQSTKGPLTTGTSD. K2005 carries the post-translational modification N6-acetyllysine. Composition is skewed to polar residues over residues 2113–2124, 2137–2151, and 2325–2334; these read GTISRSASQDPY, SYSQ…NPDP, and GNFSTSSNLP. Low complexity predominate over residues 2335–2347; that stretch reads VSSQGQQFSSVSQ. The span at 2355–2369 shows a compositional bias: polar residues; the sequence is SGGTDTQNTVNMSQA. 2 positions are modified to asymmetric dimethylarginine: R2447 and R2563. Disordered regions lie at residues 2561–2668, 2702–2736, and 2786–2844; these read RSRL…DNLE, KDLD…NDPN, and VEPK…GDAD. Composition is skewed to polar residues over residues 2602-2611, 2621-2636, and 2653-2668; these read QPSQCLSNQL, PPSQ…QSSI, and PLST…DNLE. The span at 2788–2807 shows a compositional bias: basic and acidic residues; that stretch reads PKTRDQGDKTMVLEDKDLPQ. An N6-acetyllysine mark is found at K2796 and K2803. S2822 is modified (phosphoserine). Y2824 is subject to Phosphotyrosine. Positions 2825–2843 are enriched in basic and acidic residues; sequence SKEEIQSEIKNHDDSRGDA. An N6-acetyllysine mark is found at K2826 and K2862. Residues 2920-2953 form a disordered region; that stretch reads EKCDDSDIRPSGSSPPSLPISPSTHGSSLPPTLI. The span at 2929–2942 shows a compositional bias: low complexity; it reads PSGSSPPSLPISPS. Coiled coils occupy residues 3047-3074 and 3166-3193; these read LLQD…QRSE and NDSQ…YLEE. Residues 3198–3214 show a composition bias toward basic residues; sequence HRKSKKALSAKQRTAKK. Positions 3198–3223 are disordered; sequence HRKSKKALSAKQRTAKKAGREFPEED. Coiled coils occupy residues 3224–3270 and 3387–3432; these read AEQL…QQCA and FSES…QHCL. 2 disordered regions span residues 3329–3407 and 3444–3910; these read PGWQ…QERQ and SQMP…QKMA. Residues 3391–3407 show a composition bias toward basic and acidic residues; sequence FQERERKERLREQQERQ. Over residues 3464-3485 the composition is skewed to low complexity; it reads LQQSPQHQQQIGPVLQQQNVQQ. 4 stretches are compositionally biased toward polar residues: residues 3486 to 3503, 3515 to 3524, 3557 to 3586, and 3632 to 3647; these read GSVN…NEQR, PSASGGSPNF, PVAN…SLIQ, and LSET…PSEL. Basic and acidic residues-rich tracts occupy residues 3697 to 3739 and 3795 to 3804; these read AEAD…KIKD and SSTKDGKLIE. The residue at position 3709 (K3709) is an N6-acetyllysine. The span at 3871-3885 shows a compositional bias: polar residues; it reads MYSSSDSFTHLKQQN. Positions 3890-3904 are enriched in pro residues; that stretch reads PPTPPASLPPTPPPM. S4027 is modified (phosphoserine). R4132 carries the post-translational modification Asymmetric dimethylarginine. The interval 4159 to 4184 is disordered; sequence PNVPFPPTSNGLSGYKDSSHGPAEGA. S4260 is modified (phosphoserine). The segment at 4391-4431 adopts a C2HC pre-PHD-type 2 zinc-finger fold; that stretch reads CRKCCFCHEEGDGLTDGPARLLNLDLDLWVHLNCALWSTEV. The PHD-type 8 zinc finger occupies 4452 to 4499; that stretch reads MKCVFCHKTGATSGCHRFRCTNIYHFTCATKAQCMFFKDKTMLCPMHK. An FYR N-terminal domain is found at 4537–4597; the sequence is DHTFRVGSLI…CRYLCSIEEK (61 aa). The FYR C-terminal domain occupies 4598-4683; sequence DGRPVFVIRI…EACENYTFRY (86 aa). Positions 4699–4704 match the WDR5 interaction motif (WIN) motif; it reads GCARSE. Residues 4763-4879 enclose the SET domain; it reads SNVYLARSRI…KGEELCYDYK (117 aa). S-adenosyl-L-methionine contacts are provided by residues Y4817 and 4840 to 4841; that span reads NH. Zn(2+) contacts are provided by C4843, C4891, C4893, and C4898. Residues 4887 to 4903 form the Post-SET domain; sequence HKIPCHCGAVNCRKWMN.

It belongs to the class V-like SAM-binding methyltransferase superfamily. Histone-lysine methyltransferase family. TRX/MLL subfamily. Component of the MLL3 complex (also named ASCOM complex), at least composed of catalytic subunit KMT2C/MLL3, ASH2L, RBBP5, WDR5, NCOA6, DPY30, KDM6A, PAXIP1/PTIP, PAGR1 and alpha- and beta-tubulin. Forms a core complex with the evolutionary conserved subcomplex WRAD composed of WDR5, RBBP5, ASH2L/ASH2 and DPY30 subunits; WRAD differentially stimulates the methyltransferase activity. Interacts (via WIN motif) with WDR5. As to expression, in adult, detected in testis, kidney, spleen and lung, weakly expressed in brain and absent in heart and liver. First detected throughout the embryo at 8 dpc when expression is strong in forebrain neuroepithelium and absent in heart. Expressed in the eye lens between 10 and 14.5 dpc. By 13 dpc, expressed strongly in spinal cord, hand/foot plates and gonads.

Its subcellular location is the nucleus. The enzyme catalyses L-lysyl(4)-[histone H3] + S-adenosyl-L-methionine = N(6)-methyl-L-lysyl(4)-[histone H3] + S-adenosyl-L-homocysteine + H(+). Histone methyltransferase that catalyzes methyl group transfer from S-adenosyl-L-methionine to the epsilon-amino group of 'Lys-4' of histone H3 (H3K4). Part of chromatin remodeling machinery predominantly forms H3K4me1 methylation marks at active chromatin sites where transcription and DNA repair take place. Likely plays a redundant role with KMT2D in enriching H3K4me1 mark on primed and active enhancer elements. This is Histone-lysine N-methyltransferase 2C (Kmt2c) from Mus musculus (Mouse).